A 249-amino-acid polypeptide reads, in one-letter code: Triosephosphate isomerase (249 aa).

9-11 provides a ligand contact to substrate; sequence NWK. His-94 acts as the Electrophile in catalysis. Glu-166 (proton acceptor) is an active-site residue. Substrate contacts are provided by residues Gly-172, Ser-214, and 235-236; that span reads GG.

Belongs to the triosephosphate isomerase family. In terms of assembly, homodimer.

The protein resides in the cytoplasm. It catalyses the reaction D-glyceraldehyde 3-phosphate = dihydroxyacetone phosphate. Its pathway is carbohydrate biosynthesis; gluconeogenesis. The protein operates within carbohydrate degradation; glycolysis; D-glyceraldehyde 3-phosphate from glycerone phosphate: step 1/1. Its function is as follows. Involved in the gluconeogenesis. Catalyzes stereospecifically the conversion of dihydroxyacetone phosphate (DHAP) to D-glyceraldehyde-3-phosphate (G3P). This chain is Triosephosphate isomerase, found in Leptospira biflexa serovar Patoc (strain Patoc 1 / Ames).